The primary structure comprises 704 residues: Elongation factor G (704 aa).

Residues 10–290 form the tr-type G domain; sequence NKVRNIGIMA…AVVDFLPNPL (281 aa). Residues 19 to 26, 83 to 87, and 137 to 140 contribute to the GTP site; these read AHIDAGKT, DTPGH, and NKMD.

Belongs to the TRAFAC class translation factor GTPase superfamily. Classic translation factor GTPase family. EF-G/EF-2 subfamily.

The protein localises to the cytoplasm. Catalyzes the GTP-dependent ribosomal translocation step during translation elongation. During this step, the ribosome changes from the pre-translocational (PRE) to the post-translocational (POST) state as the newly formed A-site-bound peptidyl-tRNA and P-site-bound deacylated tRNA move to the P and E sites, respectively. Catalyzes the coordinated movement of the two tRNA molecules, the mRNA and conformational changes in the ribosome. The protein is Elongation factor G of Paenarthrobacter aurescens (strain TC1).